The primary structure comprises 122 residues: Large ribosomal subunit protein uL14 (122 aa).

This sequence belongs to the universal ribosomal protein uL14 family. In terms of assembly, part of the 50S ribosomal subunit. Forms a cluster with proteins L3 and L19. In the 70S ribosome, L14 and L19 interact and together make contacts with the 16S rRNA in bridges B5 and B8.

Its function is as follows. Binds to 23S rRNA. Forms part of two intersubunit bridges in the 70S ribosome. The polypeptide is Large ribosomal subunit protein uL14 (Agathobacter rectalis (strain ATCC 33656 / DSM 3377 / JCM 17463 / KCTC 5835 / VPI 0990) (Eubacterium rectale)).